A 32-amino-acid chain; its full sequence is Tail virion protein G9P (32 aa).

Residues 8–24 (FASFVLGWCLRSGITYF) form a helical membrane-spanning segment.

It belongs to the inovirus G9P protein family.

It localises to the virion. It is found in the host membrane. May initiate with G7P the virion concomitant assembly-budding process, by interacting with the packaging signal of the viral genome. The assembly-budding takes place at the host inner membrane. In turn, G7P and G9P are present at the end of the filamentous virion that emerges first from the bacterial host. The polypeptide is Tail virion protein G9P (IX) (Escherichia coli (Bacteriophage f1)).